Reading from the N-terminus, the 163-residue chain is Nucleotide-binding protein Spro_1084 (163 aa).

This sequence belongs to the YajQ family.

Its function is as follows. Nucleotide-binding protein. The chain is Nucleotide-binding protein Spro_1084 from Serratia proteamaculans (strain 568).